A 372-amino-acid chain; its full sequence is Glutamine synthetase (372 aa).

Residues 26–105 (IIAEYVWIDS…VLAECWNNDG (80 aa)) enclose the GS beta-grasp domain. Residues 112 to 372 (HRHEAAKLFE…MTKEYERESL (261 aa)) enclose the GS catalytic domain.

The protein belongs to the glutamine synthetase family. In terms of assembly, homooctamer.

It localises to the cytoplasm. It catalyses the reaction L-glutamate + NH4(+) + ATP = L-glutamine + ADP + phosphate + H(+). The protein is Glutamine synthetase (GLN1) of Kluyveromyces lactis (strain ATCC 8585 / CBS 2359 / DSM 70799 / NBRC 1267 / NRRL Y-1140 / WM37) (Yeast).